The chain runs to 330 residues: Beta-hexosaminidase (330 aa).

Substrate contacts are provided by residues Asp-62, Arg-70, Arg-133, and 163 to 164 (KH). His-176 (proton donor/acceptor) is an active-site residue. The Nucleophile role is filled by Asp-246.

It belongs to the glycosyl hydrolase 3 family. NagZ subfamily.

It localises to the cytoplasm. It carries out the reaction Hydrolysis of terminal non-reducing N-acetyl-D-hexosamine residues in N-acetyl-beta-D-hexosaminides.. The protein operates within cell wall biogenesis; peptidoglycan recycling. Functionally, plays a role in peptidoglycan recycling by cleaving the terminal beta-1,4-linked N-acetylglucosamine (GlcNAc) from peptide-linked peptidoglycan fragments, giving rise to free GlcNAc, anhydro-N-acetylmuramic acid and anhydro-N-acetylmuramic acid-linked peptides. The polypeptide is Beta-hexosaminidase (Idiomarina loihiensis (strain ATCC BAA-735 / DSM 15497 / L2-TR)).